Here is a 146-residue protein sequence, read N- to C-terminus: Vascular endothelial growth factor isoform GtVF (146 aa).

A signal peptide spans 1–24 (MAAYLLAVAILFCIQGWPSGTVQG). Q25 is subject to Pyrrolidone carboxylic acid. 3 disulfides stabilise this stretch: C38-C80, C69-C115, and C73-C117. Residues 116-146 (ECRPRSRSGVDSGKRKRNPEEGEPRAKFPFV) are disordered. A compositionally biased stretch (basic and acidic residues) spans 133–146 (NPEEGEPRAKFPFV).

Belongs to the PDGF/VEGF growth factor family. Snake venom VEGF subfamily. Homodimer; disulfide-linked. As to expression, expressed by the venom gland.

It is found in the secreted. Snake venom VEGFs that may contribute to venom dispersion and prey subjugation by inducing vascular permeability and hypotension. This protein induces an increase in capillary permeability after intradermal injection, in a VEGFR-2 (KDR) dependent manner. In addition, it provokes a drastic hypotensive effect after intravenous injection. The hypotension is mediated by nitric oxide (NO), which is produced by VEGF-activated endothelium NO synthase. Also induces angiogenesis in vitro. Unlike other crotalid VEGFs, this protein probably interacts with VEGF receptor-2 (KDR). In Gloydius tsushimaensis (Tsushima Island pitviper), this protein is Vascular endothelial growth factor isoform GtVF.